The following is a 336-amino-acid chain: Coproporphyrin III ferrochelatase (336 aa).

Fe-coproporphyrin III contacts are provided by Ser-52 and Tyr-116. 2 residues coordinate Fe(2+): His-172 and Glu-255.

Belongs to the ferrochelatase family.

It localises to the cytoplasm. It carries out the reaction Fe-coproporphyrin III + 2 H(+) = coproporphyrin III + Fe(2+). Its pathway is porphyrin-containing compound metabolism; protoheme biosynthesis. Involved in coproporphyrin-dependent heme b biosynthesis. Catalyzes the insertion of ferrous iron into coproporphyrin III to form Fe-coproporphyrin III. The sequence is that of Coproporphyrin III ferrochelatase from Mycolicibacterium paratuberculosis (strain ATCC BAA-968 / K-10) (Mycobacterium paratuberculosis).